Here is a 246-residue protein sequence, read N- to C-terminus: Probable transcriptional regulatory protein HD_0596 (246 aa).

Belongs to the TACO1 family.

The protein localises to the cytoplasm. The sequence is that of Probable transcriptional regulatory protein HD_0596 from Haemophilus ducreyi (strain 35000HP / ATCC 700724).